Reading from the N-terminus, the 407-residue chain is Polygalacturonase (407 aa).

The N-terminal stretch at 1–26 (MAPHLNIVPSMFVLLLLFISASKVQP) is a signal peptide. PbH1 repeat units lie at residues 180 to 206 (CKNI…HMGK) and 207 to 228 (SEGV…SIGD). Asn182 carries N-linked (GlcNAc...) asparagine glycosylation. The active-site Proton donor is the Asp221. Cys223 and Cys240 are oxidised to a cystine. His244 is a catalytic residue. PbH1 repeat units follow at residues 260-281 (VEGI…RIKT) and 290-311 (VSEI…LIDQ). Asn267, Asn272, Asn302, and Asn331 each carry an N-linked (GlcNAc...) asparagine glycan. Disulfide bonds link Cys351–Cys357 and Cys379–Cys395. Residues 357 to 384 (CQNVELADIDIQHNGAEPATSQCLNVKP) form a PbH1 5 repeat.

Belongs to the glycosyl hydrolase 28 family. As to expression, pollen.

It is found in the secreted. It localises to the cell wall. The enzyme catalyses (1,4-alpha-D-galacturonosyl)n+m + H2O = (1,4-alpha-D-galacturonosyl)n + (1,4-alpha-D-galacturonosyl)m.. Its function is as follows. May function in the depolymerization of the pectin in its walls during pollen tube elongation, or in that of the pistil during pollination. The polypeptide is Polygalacturonase (G9) (Gossypium barbadense (Sea Island cotton)).